A 427-amino-acid polypeptide reads, in one-letter code: Inward rectifier potassium channel 2 (427 aa).

The Cytoplasmic portion of the chain corresponds to 1-81; sequence MGSVRTNRYS…IFTTCVDIRW (81 aa). S-nitrosocysteine is present on Cys-76. Residues 82-106 traverse the membrane as a helical segment; the sequence is RWMLVIFCLAFVLSWLFFGCVFWLI. At 107–128 the chain is on the extracellular side; sequence ALLHGDLDASKESKACVSEVNS. An intramembrane region (helical; Pore-forming) is located at residues 129–140; the sequence is FTAAFLFSIETQ. Positions 141 to 147 form an intramembrane region, pore-forming; sequence TTIGYGF. A Selectivity filter motif is present at residues 142 to 147; that stretch reads TIGYGF. Over 148–156 the chain is Extracellular; that stretch reads RCVTDECPI. A helical membrane pass occupies residues 157–178; sequence AVFMVVFQSIVGCIIDAFIIGA. At 179 to 427 the chain is on the cytoplasmic side; sequence VMAKMAKPKK…PRPLRRESEI (249 aa). The segment at 181–208 is polyphosphoinositide (PIP2)-binding; sequence AKMAKPKKRNETLVFSHNAVIAMRDGKL. Positions 384-427 are disordered; that stretch reads SKEEDDSENGVPESTSTDTPPDIDLHNQASVPLEPRPLRRESEI. Residues 425-427 carry the PDZ-binding motif; sequence SEI.

Belongs to the inward rectifier-type potassium channel (TC 1.A.2.1) family. KCNJ2 subfamily. As to quaternary structure, homotetramer. Homomultimeric and heteromultimeric association with KCNJ4/Kir2.3. Can form heteromeric channels with Kir2.6/KCNJ18. Associates, via its PDZ-recognition domain, with a complex containing LIN7A, LIN7B, LIN7C, DLG1, CASK and APBA1. Post-translationally, S-nitrosylation increases the open probability and inward rectifying currents.

It localises to the cell membrane. Its subcellular location is the sarcolemma. The protein resides in the T-tubule. The catalysed reaction is K(+)(in) = K(+)(out). Its activity is regulated as follows. Activated by phosphatidylinositol 4,5 biphosphate (PtdIns(4,5)P2). Its function is as follows. Inward rectifier potassium channels are characterized by a greater tendency to allow potassium to flow into the cell rather than out of it. Their voltage dependence is regulated by the concentration of extracellular potassium; as external potassium is raised, the voltage range of the channel opening shifts to more positive voltages. The inward rectification is mainly due to the blockage of outward current by internal magnesium. Blocked by external barium or cesium. Probably participates in establishing action potential waveform and excitability of neuronal and muscle tissues. The sequence is that of Inward rectifier potassium channel 2 (KCNJ2) from Cavia porcellus (Guinea pig).